We begin with the raw amino-acid sequence, 626 residues long: UvrABC system protein C (626 aa).

Positions 26–105 constitute a GIY-YIG domain; sequence QEPGVYFMGD…IKQHQPHFNV (80 aa). The UVR domain occupies 215–250; the sequence is QELHQLLTQQMEKAAADLKFEQAALIRDQINSLGKL.

This sequence belongs to the UvrC family. As to quaternary structure, interacts with UvrB in an incision complex.

It is found in the cytoplasm. Functionally, the UvrABC repair system catalyzes the recognition and processing of DNA lesions. UvrC both incises the 5' and 3' sides of the lesion. The N-terminal half is responsible for the 3' incision and the C-terminal half is responsible for the 5' incision. This is UvrABC system protein C from Synechocystis sp. (strain ATCC 27184 / PCC 6803 / Kazusa).